The following is a 937-amino-acid chain: Isoleucine--tRNA ligase (937 aa).

A 'HIGH' region motif is present at residues 58 to 68; the sequence is PYANGSIHIGH. Glutamate 561 lines the L-isoleucyl-5'-AMP pocket. A 'KMSKS' region motif is present at residues 602-606; the sequence is KMSKS. Lysine 605 is an ATP binding site. Residues cysteine 900, cysteine 903, cysteine 920, and cysteine 923 each contribute to the Zn(2+) site.

The protein belongs to the class-I aminoacyl-tRNA synthetase family. IleS type 1 subfamily. Monomer. It depends on Zn(2+) as a cofactor.

Its subcellular location is the cytoplasm. The enzyme catalyses tRNA(Ile) + L-isoleucine + ATP = L-isoleucyl-tRNA(Ile) + AMP + diphosphate. Functionally, catalyzes the attachment of isoleucine to tRNA(Ile). As IleRS can inadvertently accommodate and process structurally similar amino acids such as valine, to avoid such errors it has two additional distinct tRNA(Ile)-dependent editing activities. One activity is designated as 'pretransfer' editing and involves the hydrolysis of activated Val-AMP. The other activity is designated 'posttransfer' editing and involves deacylation of mischarged Val-tRNA(Ile). The chain is Isoleucine--tRNA ligase from Pectobacterium atrosepticum (strain SCRI 1043 / ATCC BAA-672) (Erwinia carotovora subsp. atroseptica).